Here is a 575-residue protein sequence, read N- to C-terminus: 3-hydroxy-3-methylglutaryl-coenzyme A reductase 1 (575 aa).

Over residues 1 to 13 (MDTTGRLHHRKHA) the composition is skewed to basic residues. The segment at 1 to 25 (MDTTGRLHHRKHATPVEDRSPTTPK) is disordered. Transmembrane regions (helical) follow at residues 29–49 (ALPLPLYLTNAVFFTLFFSVA) and 73–93 (EIVAIVSLIASFIYLLGFFGI). The segment at 97–160 (QSFIARASHD…PLIAPLVSEE (64 aa)) is linker. An N-linked (GlcNAc...) asparagine glycan is attached at asparagine 132. The catalytic stretch occupies residues 161 to 575 (DEMIVNSVVD…SSKDMSKAAS (415 aa)). The Charge relay system role is filled by glutamate 254. N-linked (GlcNAc...) asparagine glycosylation is present at asparagine 318. Catalysis depends on charge relay system residues lysine 386 and aspartate 462. The helical transmembrane segment at 531-551 (LLAAIVAGSVLAGELSLMSAI) threads the bilayer. Histidine 560 acts as the Proton donor in catalysis. Residue asparagine 564 is glycosylated (N-linked (GlcNAc...) asparagine).

The protein belongs to the HMG-CoA reductase family.

It is found in the endoplasmic reticulum membrane. It localises to the mitochondrion membrane. The protein resides in the plastid membrane. The catalysed reaction is (R)-mevalonate + 2 NADP(+) + CoA = (3S)-3-hydroxy-3-methylglutaryl-CoA + 2 NADPH + 2 H(+). Its pathway is metabolic intermediate biosynthesis; (R)-mevalonate biosynthesis; (R)-mevalonate from acetyl-CoA: step 3/3. Catalyzes the synthesis of mevalonate. The specific precursor of all isoprenoid compounds present in plants. The protein is 3-hydroxy-3-methylglutaryl-coenzyme A reductase 1 (HMGR1) of Hevea brasiliensis (Para rubber tree).